A 352-amino-acid polypeptide reads, in one-letter code: Holliday junction branch migration complex subunit RuvB (352 aa).

The large ATPase domain (RuvB-L) stretch occupies residues 13 to 201 (LPLRKKELRL…FGISQKIEFY (189 aa)). ATP contacts are provided by residues arginine 41, glycine 82, lysine 85, threonine 86, threonine 87, 148 to 150 (EDF), arginine 191, tyrosine 201, and arginine 238. Threonine 86 serves as a coordination point for Mg(2+). The small ATPAse domain (RuvB-S) stretch occupies residues 202-273 (NYDELKQILL…LIKKALNSYQ (72 aa)). Positions 276 to 352 (DKGLDSLDRH…KYIDSKNDDF (77 aa)) are head domain (RuvB-H). DNA is bound by residues arginine 330 and arginine 335.

It belongs to the RuvB family. As to quaternary structure, homohexamer. Forms an RuvA(8)-RuvB(12)-Holliday junction (HJ) complex. HJ DNA is sandwiched between 2 RuvA tetramers; dsDNA enters through RuvA and exits via RuvB. An RuvB hexamer assembles on each DNA strand where it exits the tetramer. Each RuvB hexamer is contacted by two RuvA subunits (via domain III) on 2 adjacent RuvB subunits; this complex drives branch migration. In the full resolvosome a probable DNA-RuvA(4)-RuvB(12)-RuvC(2) complex forms which resolves the HJ.

It localises to the cytoplasm. It catalyses the reaction ATP + H2O = ADP + phosphate + H(+). Its function is as follows. The RuvA-RuvB-RuvC complex processes Holliday junction (HJ) DNA during genetic recombination and DNA repair, while the RuvA-RuvB complex plays an important role in the rescue of blocked DNA replication forks via replication fork reversal (RFR). RuvA specifically binds to HJ cruciform DNA, conferring on it an open structure. The RuvB hexamer acts as an ATP-dependent pump, pulling dsDNA into and through the RuvAB complex. RuvB forms 2 homohexamers on either side of HJ DNA bound by 1 or 2 RuvA tetramers; 4 subunits per hexamer contact DNA at a time. Coordinated motions by a converter formed by DNA-disengaged RuvB subunits stimulates ATP hydrolysis and nucleotide exchange. Immobilization of the converter enables RuvB to convert the ATP-contained energy into a lever motion, pulling 2 nucleotides of DNA out of the RuvA tetramer per ATP hydrolyzed, thus driving DNA branch migration. The RuvB motors rotate together with the DNA substrate, which together with the progressing nucleotide cycle form the mechanistic basis for DNA recombination by continuous HJ branch migration. Branch migration allows RuvC to scan DNA until it finds its consensus sequence, where it cleaves and resolves cruciform DNA. This chain is Holliday junction branch migration complex subunit RuvB, found in Prochlorococcus marinus (strain MIT 9301).